Reading from the N-terminus, the 365-residue chain is GTPase Obg (365 aa).

The Obg domain occupies 1–159 (MKFIDEARIE…RMLKLELKVL (159 aa)). Residues 160-334 (ADVGLLGMPN…LIYAIKDHLQ (175 aa)) form the OBG-type G domain. Residues 166 to 173 (GMPNAGKS), 191 to 195 (FTTLH), 213 to 216 (DIPG), 284 to 287 (NKLD), and 315 to 317 (SAL) contribute to the GTP site. Mg(2+) contacts are provided by serine 173 and threonine 193.

It belongs to the TRAFAC class OBG-HflX-like GTPase superfamily. OBG GTPase family. Monomer. Mg(2+) is required as a cofactor.

Its subcellular location is the cytoplasm. Its function is as follows. An essential GTPase which binds GTP, GDP and possibly (p)ppGpp with moderate affinity, with high nucleotide exchange rates and a fairly low GTP hydrolysis rate. Plays a role in control of the cell cycle, stress response, ribosome biogenesis and in those bacteria that undergo differentiation, in morphogenesis control. The protein is GTPase Obg of Cupriavidus taiwanensis (strain DSM 17343 / BCRC 17206 / CCUG 44338 / CIP 107171 / LMG 19424 / R1) (Ralstonia taiwanensis (strain LMG 19424)).